The primary structure comprises 323 residues: Ankyrin repeat and SOCS box protein 11 (323 aa).

7 ANK repeats span residues 64 to 93 (ADRS…NVNL), 97 to 126 (NRVS…HVNA), 130 to 159 (HGAT…KAQL), 162 to 191 (YLAS…NIEQ), 195 to 224 (QLGT…SVDH), 227 to 256 (WLDT…NLNL), and 260 to 289 (QGKS…ALSQ). The SOCS box domain occupies 273–323 (SVRQALLLHEGPPALSQLCRLCVRKCLGRTCHHAIYALGLPESLEKFLLYQ).

Belongs to the ankyrin SOCS box (ASB) family. In terms of assembly, substrate-recognition component of the ECS(ASB11) complex, composed of ASB11, CUL5, ELOB, ELOC and RNF7/RBX2.

It localises to the endoplasmic reticulum. Its pathway is protein modification; protein ubiquitination. Substrate-recognition component of a cullin-5-RING E3 ubiquitin-protein ligase complex (ECS complex, also named CRL5 complex), which mediates the ubiquitination and subsequent proteasomal degradation of target proteins, such as BIK, DIRAS2 and RPN1. The ECS(ASB11) complex acts as a regulator of the endoplasmic reticulum unfolded protein response by mediating ubiquitination and degradation of BIK. This chain is Ankyrin repeat and SOCS box protein 11 (Asb11), found in Mus musculus (Mouse).